Here is a 98-residue protein sequence, read N- to C-terminus: NADH-ubiquinone oxidoreductase chain 4L (98 aa).

A run of 3 helical transmembrane segments spans residues methionine 1–methionine 21, serine 29–leucine 49, and isoleucine 61–valine 81.

Belongs to the complex I subunit 4L family. Core subunit of respiratory chain NADH dehydrogenase (Complex I) which is composed of 45 different subunits.

It localises to the mitochondrion inner membrane. It carries out the reaction a ubiquinone + NADH + 5 H(+)(in) = a ubiquinol + NAD(+) + 4 H(+)(out). Core subunit of the mitochondrial membrane respiratory chain NADH dehydrogenase (Complex I) which catalyzes electron transfer from NADH through the respiratory chain, using ubiquinone as an electron acceptor. Part of the enzyme membrane arm which is embedded in the lipid bilayer and involved in proton translocation. The chain is NADH-ubiquinone oxidoreductase chain 4L (MT-ND4L) from Mogera wogura (Japanese mole).